The chain runs to 187 residues: Adenine phosphoribosyltransferase (187 aa).

Belongs to the purine/pyrimidine phosphoribosyltransferase family. Homodimer.

The protein resides in the cytoplasm. It carries out the reaction AMP + diphosphate = 5-phospho-alpha-D-ribose 1-diphosphate + adenine. It participates in purine metabolism; AMP biosynthesis via salvage pathway; AMP from adenine: step 1/1. In terms of biological role, catalyzes a salvage reaction resulting in the formation of AMP, that is energically less costly than de novo synthesis. This chain is Adenine phosphoribosyltransferase, found in Yersinia enterocolitica serotype O:8 / biotype 1B (strain NCTC 13174 / 8081).